Reading from the N-terminus, the 177-residue chain is MIIAVTGTPGVGKTTISKLLAEKLGYEYVNLRDYALEKGIGEMKENELEIDVDELREAFGRDFKGKNVVADGHLSHFLKADLVIVLRANPKLIAERLKERGYGREKLGENVEAELVDVILVEALEENENVIEVDTTGKTPEEVVEEILNLIRRGVKRRVGIVDWSEVYDEVLPYLRL.

Positions 10, 12, 13, 14, and 15 each coordinate ATP. The tract at residues 30 to 50 is NMP; that stretch reads NLRDYALEKGIGEMKENELEI. Residues 99-109 are LID; sequence ERGYGREKLGE. Arg-100 and Lys-138 together coordinate ATP.

It belongs to the adenylate kinase family. AK6 subfamily. In terms of assembly, interacts with uS11. Not a structural component of 40S pre-ribosomes, but transiently interacts with them by binding to uS11.

It catalyses the reaction AMP + ATP = 2 ADP. It carries out the reaction ATP + H2O = ADP + phosphate + H(+). Its function is as follows. Broad-specificity nucleoside monophosphate (NMP) kinase that catalyzes the reversible transfer of the terminal phosphate group between nucleoside triphosphates and monophosphates. Also has ATPase activity. Involved in the late maturation steps of the 30S ribosomal particles, specifically 16S rRNA maturation. While NMP activity is not required for ribosome maturation, ATPase activity is. Associates transiently with small ribosomal subunit protein uS11. ATP hydrolysis breaks the interaction with uS11. May temporarily remove uS11 from the ribosome to enable a conformational change of the ribosomal RNA that is needed for the final maturation step of the small ribosomal subunit. The protein is Putative adenylate kinase of Thermococcus kodakarensis (strain ATCC BAA-918 / JCM 12380 / KOD1) (Pyrococcus kodakaraensis (strain KOD1)).